Reading from the N-terminus, the 88-residue chain is Small ribosomal subunit protein bS20 (88 aa).

This sequence belongs to the bacterial ribosomal protein bS20 family.

Functionally, binds directly to 16S ribosomal RNA. In Methylorubrum extorquens (strain CM4 / NCIMB 13688) (Methylobacterium extorquens), this protein is Small ribosomal subunit protein bS20.